A 1715-amino-acid polypeptide reads, in one-letter code: Rho guanine nucleotide exchange factor TIAM2 (1715 aa).

Composition is skewed to polar residues over residues M1–G22 and G218–D229. 4 disordered regions span residues M1–P27, F174–S249, S263–S294, and T385–G418. G2 is lipidated: N-myristoyl glycine. Positions S235–S245 are enriched in low complexity. Over residues L395 to S411 the composition is skewed to basic and acidic residues. Residues V504–A618 form the PH 1 domain. Residues P665–M692 are a coiled coil. Residues V831–I902 enclose the RBD domain. The PDZ domain maps to D911 to T997. The segment at T1092–R1113 is disordered. Residues R1120–M1314 enclose the DH domain. Residues L1347–N1478 form the PH 2 domain. The interval S1515 to L1582 is disordered. Positions S1522–S1532 are enriched in low complexity. The segment covering K1533–G1552 has biased composition (polar residues). Basic and acidic residues predominate over residues E1557–Q1572. At S1604 the chain carries Phosphoserine. T1662 bears the Phosphothreonine mark.

This sequence belongs to the TIAM family. In terms of assembly, interacts with MAP1A, MAP1B, PARP1 and YWHAE. Interacts with CD44, PARD3 and MAPK8IP2. Phosphorylated on serine and threonine residues. Phosphorylated on Thr-1662 by Rho-kinase. Its phosphorylation by Rho-kinase inhibits its guanine nucleotide exchange activity, its interaction with MAP1A, MAP1B, PARP1 and YWHAE and reduces its ability to promote neurite growth. Expressed in fetal brain (at protein level). Expressed in the olfactory bulb, cortical plate of the cerebral cortex, caudate putamen, hippocampus, ependymal cells of the lateral surface of the lateral ventricles of the brain. Weakly expressed in heart, lung, liver, skeletal muscle, kidney and testis.

The protein resides in the cytoplasm. Its subcellular location is the cell projection. It is found in the lamellipodium. The protein localises to the filopodium. It localises to the growth cone. The protein resides in the neuron projection. Its subcellular location is the perikaryon. In terms of biological role, modulates the activity of RHO-like proteins and connects extracellular signals to cytoskeletal activities. Acts as a GDP-dissociation stimulator protein that stimulates the GDP-GTP exchange activity of RHO-like GTPases and activates them. Activates specifically RAC1, but not CDC42 and RHOA. Mediates extracellular laminin signals to activate Rac1, contributing to neurite growth. Involved in lamellipodial formation and advancement of the growth cone of embryonic hippocampal neurons. Promotes migration of neurons in the cerebral cortex. When overexpressed, induces membrane ruffling accompanied by the accumulation of actin filaments along the altered plasma membrane. This Mus musculus (Mouse) protein is Rho guanine nucleotide exchange factor TIAM2.